The sequence spans 228 residues: Small ribosomal subunit protein uS3 (228 aa).

Residues 39-107 (TREYLQDKLK…PVHINIEEIR (69 aa)) enclose the KH type-2 domain.

The protein belongs to the universal ribosomal protein uS3 family. Part of the 30S ribosomal subunit. Forms a tight complex with proteins S10 and S14.

In terms of biological role, binds the lower part of the 30S subunit head. Binds mRNA in the 70S ribosome, positioning it for translation. The sequence is that of Small ribosomal subunit protein uS3 from Pseudomonas putida (strain ATCC 700007 / DSM 6899 / JCM 31910 / BCRC 17059 / LMG 24140 / F1).